We begin with the raw amino-acid sequence, 408 residues long: Peptidase T (408 aa).

Residue H78 coordinates Zn(2+). Residue D80 is part of the active site. Zn(2+) is bound at residue D140. The active-site Proton acceptor is the E173. 3 residues coordinate Zn(2+): E174, D196, and H379.

This sequence belongs to the peptidase M20B family. The cofactor is Zn(2+).

Its subcellular location is the cytoplasm. The catalysed reaction is Release of the N-terminal residue from a tripeptide.. Its function is as follows. Cleaves the N-terminal amino acid of tripeptides. The polypeptide is Peptidase T (Escherichia coli O9:H4 (strain HS)).